We begin with the raw amino-acid sequence, 687 residues long: FAD-dependent oxidoreductase domain-containing protein 2 (687 aa).

Positions 1–22 (MSVIQLVFRLLCVLDLLLAVSA) are cleaved as a signal peptide. Asparagine 29 and asparagine 305 each carry an N-linked (GlcNAc...) asparagine glycan.

It belongs to the FOXRED2 family. The cofactor is FAD. N-glycosylated.

The protein resides in the endoplasmic reticulum lumen. Functionally, probable flavoprotein which may function in endoplasmic reticulum associated degradation (ERAD). May bind non-native proteins in the endoplasmic reticulum and target them to the ubiquitination machinery for subsequent degradation. In Danio rerio (Zebrafish), this protein is FAD-dependent oxidoreductase domain-containing protein 2 (foxred2).